The chain runs to 325 residues: 26S proteasome non-ATPase regulatory subunit 7 (325 aa).

Positions 8–142 (TIVHPTVLLS…TKSYVTVEEI (135 aa)) constitute an MPN domain. The interval 285-325 (KKADIINSTPPTTATSPSVADKGKEKEQNAFNGADKPSKQA) is disordered. Over residues 292-302 (STPPTTATSPS) the composition is skewed to low complexity.

It belongs to the peptidase M67A family.

Functionally, acts as a regulatory subunit of the 26S proteasome which is involved in the ATP-dependent degradation of ubiquitinated proteins. The protein is 26S proteasome non-ATPase regulatory subunit 7 (psmD7) of Dictyostelium discoideum (Social amoeba).